The following is a 176-amino-acid chain: Probable DNA-directed RNA polymerase subunit delta (176 aa).

Residues lysine 14–tryptophan 81 form the HTH HARE-type domain. The interval leucine 114–aspartate 176 is disordered. Acidic residues-rich tracts occupy residues glutamate 116–glutamate 145 and valine 153–aspartate 176.

Belongs to the RpoE family. RNAP is composed of a core of 2 alpha, a beta and a beta' subunits. The core is associated with a delta subunit and one of several sigma factors.

Its function is as follows. Participates in both the initiation and recycling phases of transcription. In the presence of the delta subunit, RNAP displays an increased specificity of transcription, a decreased affinity for nucleic acids, and an increased efficiency of RNA synthesis because of enhanced recycling. This is Probable DNA-directed RNA polymerase subunit delta from Staphylococcus aureus (strain JH1).